The sequence spans 89 residues: Small ribosomal subunit protein uS15 (89 aa).

The protein belongs to the universal ribosomal protein uS15 family. As to quaternary structure, part of the 30S ribosomal subunit. Forms a bridge to the 50S subunit in the 70S ribosome, contacting the 23S rRNA.

In terms of biological role, one of the primary rRNA binding proteins, it binds directly to 16S rRNA where it helps nucleate assembly of the platform of the 30S subunit by binding and bridging several RNA helices of the 16S rRNA. Its function is as follows. Forms an intersubunit bridge (bridge B4) with the 23S rRNA of the 50S subunit in the ribosome. This chain is Small ribosomal subunit protein uS15, found in Streptococcus pyogenes serotype M1.